The sequence spans 57 residues: DNA-directed RNA polymerase subunit Rpo6 (57 aa).

This sequence belongs to the archaeal Rpo6/eukaryotic RPB6 RNA polymerase subunit family. In terms of assembly, part of the RNA polymerase complex.

The protein resides in the cytoplasm. It carries out the reaction RNA(n) + a ribonucleoside 5'-triphosphate = RNA(n+1) + diphosphate. Its function is as follows. DNA-dependent RNA polymerase (RNAP) catalyzes the transcription of DNA into RNA using the four ribonucleoside triphosphates as substrates. The sequence is that of DNA-directed RNA polymerase subunit Rpo6 from Pyrococcus furiosus (strain ATCC 43587 / DSM 3638 / JCM 8422 / Vc1).